Here is a 250-residue protein sequence, read N- to C-terminus: Adenosine 5'-phosphosulfate reductase (250 aa).

Residues cysteine 119, cysteine 120, cysteine 202, and cysteine 205 each contribute to the [4Fe-4S] cluster site. Catalysis depends on cysteine 230, which acts as the Nucleophile; cysteine thiosulfonate intermediate.

Belongs to the PAPS reductase family. CysH subfamily. It depends on [4Fe-4S] cluster as a cofactor.

The protein localises to the cytoplasm. It catalyses the reaction [thioredoxin]-disulfide + sulfite + AMP + 2 H(+) = adenosine 5'-phosphosulfate + [thioredoxin]-dithiol. It functions in the pathway sulfur metabolism; hydrogen sulfide biosynthesis; sulfite from sulfate. Catalyzes the formation of sulfite from adenosine 5'-phosphosulfate (APS) using thioredoxin as an electron donor. This Burkholderia cepacia (Pseudomonas cepacia) protein is Adenosine 5'-phosphosulfate reductase.